A 572-amino-acid polypeptide reads, in one-letter code: MTSRDQPRPKGPPKSTSPCPGISNSESSPTLNYQGILNRLKQFPRFSPHFAAELESIYYSLHKIQQDVAEHHKQIGNVLQIVESCSQLQGFQSEEVSPAEPASPGTPQQVKDKTLQESSFEDIMATRSSDWLRRPLGEDNQPETQLFWDKEPWFWHDTLTEQLWRIFAGVHDEKAKPRDRQQAPGLGQESKAPGSCDPGTDPCPEDASTPRPPEASSSPPEGSQDRNTSWGVVQEPPGRASRFLQSISWDPEDFEDAWKRPDALPGQSKRLAVPCKLEKMRILAHGELVLATAISSFTRHVFTCGRRGIKVWSLTGQVAEDRFPESHLPIQTPGAFLRTCLLSSNSRSLLTGGYNLASVSVWDLAAPSLHVKEQLPCAGLNCQALDANLDANLAFASFTSGVVRIWDLRDQSVVRDLKGYPDGVKSIVVKGYNIWTGGPDACLRCWDQRTIMKPLEYQFKSQIMSLSHSPQEDWVLLGMANGQQWLQSTSGSQRHMVGQKDSVILSVKFSPFGQWWASVGMDDFLGVYSMPAGTKVFEVPEMSPVTCCDVSSNNRLVVTGSGEHASVYQITY.

Disordered regions lie at residues 1 to 30 (MTSR…SSPT), 92 to 121 (QSEE…SSFE), and 174 to 236 (KAKP…VQEP). Residues 14-30 (KSTSPCPGISNSESSPT) are compositionally biased toward polar residues. 7 WD repeats span residues 284 to 322 (AHGE…AEDR), 332 to 372 (TPGA…LHVK), 377 to 416 (CAGL…VVRD), 419 to 456 (GYPD…KPLE), 458 to 497 (QFKS…RHMV), 499 to 538 (QKDS…KVFE), and 540 to 571 (PEMS…YQIT). The residue at position 510 (Ser-510) is a Phosphoserine; by PKA.

Belongs to the WD repeat Groucho/TLE family. In terms of assembly, homodimers. Component of the subcortical maternal complex (SCMC), at least composed of NLRP5, KHDC3, OOEP, and TLE6. Within the complex, interacts with NLRP5, KHDC3 and OOEP. The SCMC may facilitate translocation of its components between the nuclear and cytoplasmic compartments. As part of the SCMC interacts with the SCMC-associated protein ZBED3. As part of the SCMC interacts with the SCMC-associated protein NLRP4F. As part of the SCMC interacts with the SCMC-associated protein CFL1/Cofilin-1. Interacts with FOXG1/BF-1; the interaction inhibits TLE1 interaction with FOXG1/BF-1. Interacts with NFATC1. Interacts with PAX6. As to quaternary structure, component of the subcortical maternal complex (SCMC), at least composed of NLRP5, KHDC3L, OOEP, and TLE6 isoform 1. Within the complex, interacts with NLRP5, KHDC3L and OOEP. The SCMC may facilitate translocation of its components between the nuclear and cytoplasmic compartments.

The protein localises to the cytoplasm. It is found in the nucleus. Functionally, component of the subcortical maternal complex (SCMC), a multiprotein complex that plays a key role in early embryonic development. The SCMC complex is a structural constituent of cytoplasmic lattices, which consist in fibrous structures found in the cytoplasm of oocytes and preimplantation embryos. They are required to store maternal proteins critical for embryonic development, such as proteins that control epigenetic reprogramming of the preimplantation embryo, and prevent their degradation or activation. Also required for spermatogenesis: regulates spermatogonia proliferation and cell cycle progression, potentially via regulation of cell cycle regulatory genes such as; CEBPB, CEBPA, CSF3, PCNA, and CDK4. Suppresses FOXG1/BF-1-mediated transcriptional repression by inhibiting interaction of the transcriptional corepressor TLE1 with FOXG1 which promotes cortical neuron differentiation. Acts as a transcriptional corepressor of NFATC1-mediated gene expression by contributing to PAX6-mediated repression. Its function is as follows. Component of the subcortical maternal complex (SCMC), a multiprotein complex that plays a key role in early embryonic development. This Homo sapiens (Human) protein is Transducin-like enhancer protein 6.